Here is a 106-residue protein sequence, read N- to C-terminus: uncharacterized protein (106 aa).

The segment at 38–106 is disordered; the sequence is KGNKKSKAAT…STHLPYHGSY (69 aa). Composition is skewed to basic and acidic residues over residues 57 to 71 and 82 to 96; these read TRQERDLTDRKHRPE and WKKEVTTRSRPKETS.

Its subcellular location is the mitochondrion. This is an uncharacterized protein from Arabidopsis thaliana (Mouse-ear cress).